The sequence spans 93 residues: Translation initiation factor IF-1 (93 aa).

The S1-like domain maps to 1 to 72 (MAKEELIQFE…EKGRLIFRHK (72 aa)). The tract at residues 69 to 93 (FRHKDERPSGAPRGGPPRGGQFRRR) is disordered.

Belongs to the IF-1 family. Component of the 30S ribosomal translation pre-initiation complex which assembles on the 30S ribosome in the order IF-2 and IF-3, IF-1 and N-formylmethionyl-tRNA(fMet); mRNA recruitment can occur at any time during PIC assembly.

It is found in the cytoplasm. One of the essential components for the initiation of protein synthesis. Stabilizes the binding of IF-2 and IF-3 on the 30S subunit to which N-formylmethionyl-tRNA(fMet) subsequently binds. Helps modulate mRNA selection, yielding the 30S pre-initiation complex (PIC). Upon addition of the 50S ribosomal subunit IF-1, IF-2 and IF-3 are released leaving the mature 70S translation initiation complex. The polypeptide is Translation initiation factor IF-1 (Nitrobacter hamburgensis (strain DSM 10229 / NCIMB 13809 / X14)).